A 398-amino-acid chain; its full sequence is 1-deoxy-D-xylulose 5-phosphate reductoisomerase (398 aa).

Residues threonine 10, glycine 11, serine 12, isoleucine 13, glycine 36, arginine 37, asparagine 38, and asparagine 124 each coordinate NADPH. Lysine 125 serves as a coordination point for 1-deoxy-D-xylulose 5-phosphate. Glutamate 126 serves as a coordination point for NADPH. Aspartate 150 lines the Mn(2+) pocket. 1-deoxy-D-xylulose 5-phosphate contacts are provided by serine 151, glutamate 152, serine 186, and histidine 209. Residue glutamate 152 coordinates Mn(2+). Glycine 215 contacts NADPH. Serine 222, asparagine 227, lysine 228, and glutamate 231 together coordinate 1-deoxy-D-xylulose 5-phosphate. Glutamate 231 contacts Mn(2+).

It belongs to the DXR family. As to quaternary structure, homodimer. It depends on Mg(2+) as a cofactor. Mn(2+) serves as cofactor.

The enzyme catalyses 2-C-methyl-D-erythritol 4-phosphate + NADP(+) = 1-deoxy-D-xylulose 5-phosphate + NADPH + H(+). It participates in isoprenoid biosynthesis; isopentenyl diphosphate biosynthesis via DXP pathway; isopentenyl diphosphate from 1-deoxy-D-xylulose 5-phosphate: step 1/6. Catalyzes the NADPH-dependent rearrangement and reduction of 1-deoxy-D-xylulose-5-phosphate (DXP) to 2-C-methyl-D-erythritol 4-phosphate (MEP). In Yersinia pseudotuberculosis serotype IB (strain PB1/+), this protein is 1-deoxy-D-xylulose 5-phosphate reductoisomerase.